Reading from the N-terminus, the 343-residue chain is Anthranilate phosphoribosyltransferase (343 aa).

5-phospho-alpha-D-ribose 1-diphosphate-binding positions include G81, 84–85 (GD), 91–94 (NLST), 109–117 (KHGNRSVSS), and S121. Residue G81 coordinates anthranilate. S93 contributes to the Mg(2+) binding site. N112 contacts anthranilate. R167 contributes to the anthranilate binding site. The Mg(2+) site is built by D226 and E227.

It belongs to the anthranilate phosphoribosyltransferase family. In terms of assembly, homodimer. Mg(2+) is required as a cofactor.

It catalyses the reaction N-(5-phospho-beta-D-ribosyl)anthranilate + diphosphate = 5-phospho-alpha-D-ribose 1-diphosphate + anthranilate. Its pathway is amino-acid biosynthesis; L-tryptophan biosynthesis; L-tryptophan from chorismate: step 2/5. Functionally, catalyzes the transfer of the phosphoribosyl group of 5-phosphorylribose-1-pyrophosphate (PRPP) to anthranilate to yield N-(5'-phosphoribosyl)-anthranilate (PRA). The polypeptide is Anthranilate phosphoribosyltransferase (Cellvibrio japonicus (strain Ueda107) (Pseudomonas fluorescens subsp. cellulosa)).